The chain runs to 277 residues: 3-methyl-2-oxobutanoate hydroxymethyltransferase (277 aa).

Mg(2+)-binding residues include aspartate 58 and aspartate 97. 3-methyl-2-oxobutanoate contacts are provided by residues 58–59, aspartate 97, and lysine 127; that span reads DS. Residue glutamate 129 participates in Mg(2+) binding. The Proton acceptor role is filled by glutamate 195.

It belongs to the PanB family. In terms of assembly, homodecamer; pentamer of dimers. Requires Mg(2+) as cofactor.

Its subcellular location is the cytoplasm. The catalysed reaction is 3-methyl-2-oxobutanoate + (6R)-5,10-methylene-5,6,7,8-tetrahydrofolate + H2O = 2-dehydropantoate + (6S)-5,6,7,8-tetrahydrofolate. It participates in cofactor biosynthesis; (R)-pantothenate biosynthesis; (R)-pantoate from 3-methyl-2-oxobutanoate: step 1/2. In terms of biological role, catalyzes the reversible reaction in which hydroxymethyl group from 5,10-methylenetetrahydrofolate is transferred onto alpha-ketoisovalerate to form ketopantoate. In Leifsonia xyli subsp. xyli (strain CTCB07), this protein is 3-methyl-2-oxobutanoate hydroxymethyltransferase.